The sequence spans 399 residues: Elongation factor Tu (399 aa).

The 195-residue stretch at 10–204 (KPHVNIGTIG…AVDASIPEPE (195 aa)) folds into the tr-type G domain. Residues 19-26 (GHVDHGKT) are G1. 19 to 26 (GHVDHGKT) lines the GTP pocket. Residue Thr26 participates in Mg(2+) binding. Residues 60–64 (GITIN) form a G2 region. The segment at 81 to 84 (DCPG) is G3. GTP-binding positions include 81 to 85 (DCPGH) and 136 to 139 (NKCD). The G4 stretch occupies residues 136–139 (NKCD). A G5 region spans residues 174-176 (SGL).

Belongs to the TRAFAC class translation factor GTPase superfamily. Classic translation factor GTPase family. EF-Tu/EF-1A subfamily. Monomer.

The protein localises to the cytoplasm. The catalysed reaction is GTP + H2O = GDP + phosphate + H(+). GTP hydrolase that promotes the GTP-dependent binding of aminoacyl-tRNA to the A-site of ribosomes during protein biosynthesis. The polypeptide is Elongation factor Tu (Synechococcus sp. (strain CC9902)).